A 648-amino-acid chain; its full sequence is PTS system N-acetylglucosamine-specific EIICBA component (648 aa).

An N-formylmethionine modification is found at Met1. The 371-residue stretch at Met1–Asp371 folds into the PTS EIIC type-1 domain. Helical transmembrane passes span Leu16–Leu36, Val38–Ile58, Gly70–Ile90, Pro92–Tyr112, Phe132–Trp152, Ile159–Phe179, Val192–Phe212, Gly232–Ala252, Val260–Leu280, Phe282–Ser302, Leu303–Asp323, and Met339–Ile359. Positions Thr390–Ala472 constitute a PTS EIIB type-1 domain. The active-site Phosphocysteine intermediate; for EIIB activity is Cys412. Cys412 is subject to Phosphocysteine; by EIIA. The 105-residue stretch at Asp517 to Asn621 folds into the PTS EIIA type-1 domain. Zn(2+) is bound by residues His554 and His569. The active-site Tele-phosphohistidine intermediate; for EIIA activity is the His569. Residue His569 is modified to Phosphohistidine; by HPr.

Requires Zn(2+) as cofactor. 60% of isolated protein was N-formylated.

The protein resides in the cell inner membrane. The enzyme catalyses N(pros)-phospho-L-histidyl-[protein] + N-acetyl-D-glucosamine(out) = N-acetyl-D-glucosamine 6-phosphate(in) + L-histidyl-[protein]. P-chloromercuribenzoate inhibits the accumulation of both N-acetyl-D-glucosamine and antibiotic streptozotocin (2-deoxy-2-(3-methyl-3-nitrosoureido)-D-glucopyranose). N-acetyl-D-glucosamine is a competitive inhibitor for the uptake of streptozotocin. The phosphoenolpyruvate-dependent sugar phosphotransferase system (sugar PTS), a major carbohydrate active transport system, catalyzes the phosphorylation of incoming sugar substrates concomitantly with their translocation across the cell membrane. This system is involved in N-acetylglucosamine transport. It can also transport and phosphorylate the antibiotic streptozotocin. Could play a significant role in the recycling of peptidoglycan. This Escherichia coli (strain K12) protein is PTS system N-acetylglucosamine-specific EIICBA component.